We begin with the raw amino-acid sequence, 90 residues long: U7-theraphotoxin-Hhn1b (90 aa).

Residues 1 to 19 form the signal peptide; it reads MKTAIFTVVLALAVFAVLS. Residues 20 to 50 constitute a propeptide that is removed on maturation; that stretch reads FGWEANEKALSEEFTELIHEKEAASETEARE. 3 disulfides stabilise this stretch: Cys-51-Cys-65, Cys-58-Cys-70, and Cys-64-Cys-81.

This sequence belongs to the neurotoxin 10 (Hwtx-1) family. 13 (Hntx-13) subfamily. In terms of tissue distribution, expressed by the venom gland.

The protein resides in the secreted. Its function is as follows. Ion channel inhibitor. In Cyriopagopus hainanus (Chinese bird spider), this protein is U7-theraphotoxin-Hhn1b.